Consider the following 173-residue polypeptide: Photosystem I assembly protein Ycf3 (173 aa).

TPR repeat units lie at residues Ala-35–Lys-68, Gly-72–Gln-105, and Gly-120–Gly-153.

It belongs to the Ycf3 family.

The protein localises to the cellular thylakoid membrane. Its function is as follows. Essential for the assembly of the photosystem I (PSI) complex. May act as a chaperone-like factor to guide the assembly of the PSI subunits. This chain is Photosystem I assembly protein Ycf3, found in Prochlorococcus marinus (strain MIT 9301).